Consider the following 345-residue polypeptide: MLSINPTLINRDKPYTKEELMEILRLAIIAELDAINLYEQMARYSEDENVRKILLDVAREEKAHVGEFMALLLNLDPEQVTELKGGFEEVKELTGIEAHINDNKKEESNVEYFEKLRSALLDGVNKGRSLLKHLPVTRIEGQSFRVDIIKFEDGVRVVKQEYKPIPLLKKKFYVGIRELNDGTYDVSIATKAGELLVKDEESLVIREILSTEGIKKMKLSSWDNPEEALNDLMNALQEASNASAGPFGLIINPKRYAKLLKIYEKSGKMLVEVLKEIFRGGIIVTLNIDENKVIIFANTPAVLDVVVGQDVTLQELGPEGDDVAFLVSEAIGIRIKNPEAIVVLE.

The segment at 1–109 (MLSINPTLIN…INDNKKEESN (109 aa)) is ferritin-like domain. 3 residues coordinate Fe cation: glutamate 31, glutamate 61, and histidine 64. Residues 110–345 (VEYFEKLRSA…KNPEAIVVLE (236 aa)) form an encapsulin domain region.

This sequence in the N-terminal section; belongs to the ferritin-like superfamily. In the C-terminal section; belongs to the encapsulin family. Family 1 subfamily. As to quaternary structure, 180 monomers assemble into 12 pentamers and 20 hexamers which further assemble into an icosahedral particle about 36.6 nm in diameter. The N-terminal domain (residues 1-99) crystallizes as 3 decamers.

It is found in the encapsulin nanocompartment. The catalysed reaction is 4 Fe(2+) + O2 + 4 H(+) = 4 Fe(3+) + 2 H2O. The ferroxidase activity is inhibited by zinc. Functionally, fusion of the shell and cargo protein of a type 1 encapsulin nanocompartment. The nanocompartment is probably involved in iron storage. Expression in E.coli generates spherical particles (PfSPs) about 30 nm in diameter. The purified N-terminus has ferroxidase activity. This chain is Ferritin-like-encapsulin shell fusion protein, found in Pyrococcus furiosus (strain ATCC 43587 / DSM 3638 / JCM 8422 / Vc1).